A 359-amino-acid chain; its full sequence is Probable deacetylase AF_0130 (359 aa).

His-126 serves as the catalytic Proton donor/acceptor. Zn(2+) contacts are provided by Asp-162, His-164, and Asp-249.

This sequence belongs to the histone deacetylase family. Zn(2+) serves as cofactor.

Probable deacetylase. The chain is Probable deacetylase AF_0130 from Archaeoglobus fulgidus (strain ATCC 49558 / DSM 4304 / JCM 9628 / NBRC 100126 / VC-16).